The primary structure comprises 217 residues: Nucleoredoxin-like protein 1 (217 aa).

The 164-residue stretch at 1 to 164 folds into the Thioredoxin domain; sequence MASLFSGRIL…AAELLDRSFL (164 aa). A compositionally biased stretch (basic and acidic residues) spans 188-204; it reads VDRDVGRERGRNGRDSG. Positions 188 to 217 are disordered; the sequence is VDRDVGRERGRNGRDSGDPQGDAGTRAELW.

Belongs to the nucleoredoxin family. As to quaternary structure, interacts with isoform 1 of BSG. In terms of tissue distribution, expressed in the retina (at protein level). Expressed predominantly by photoreceptors in both the inner and outer nuclear layer (at protein level). Not expressed in the testis, spleen, intestine, lung, cerebellum, or kidney.

Its subcellular location is the cell projection. The protein localises to the cilium. It is found in the photoreceptor outer segment. Its function is as follows. Plays an important role in retinal cone photoreceptor survival. In association with glucose transporter SLC16A1/GLUT1 and BSG, promotes retinal cone survival by enhancing aerobic glycolysis and accelerating the entry of glucose into photoreceptors. May play a role in cone cell viability, slowing down cone degeneration, does not seem to play a role in degenerating rods. The chain is Nucleoredoxin-like protein 1 (Nxnl1) from Mus musculus (Mouse).